A 423-amino-acid polypeptide reads, in one-letter code: Glycine amidinotransferase, mitochondrial (423 aa).

Residues 1–43 (MLRVRCLRGGSRGAEALHYIGSRLGRTVTGWVQRTFQSTQAAT) constitute a mitochondrion transit peptide. 2 positions are modified to phosphoserine: Ser-46 and Ser-49. Arginine is bound at residue Asp-170. Residues Asp-254 and His-303 contribute to the active site. Residues Asp-305, Arg-322, Ser-354, and Ser-355 each coordinate arginine. Position 385 is an N6-acetyllysine (Lys-385). Cys-407 acts as the Amidino-cysteine intermediate in catalysis.

This sequence belongs to the amidinotransferase family. As to quaternary structure, homodimer. Kidney. Expressed biallelically in placenta.

The protein localises to the mitochondrion inner membrane. It carries out the reaction L-arginine + glycine = guanidinoacetate + L-ornithine. The catalysed reaction is 4-aminobutanoate + L-arginine = 4-guanidinobutanoate + L-ornithine. It catalyses the reaction beta-alanine + L-arginine = 3-guanidinopropanoate + L-ornithine. The enzyme catalyses taurine + L-arginine = taurocyamine + L-ornithine. Its pathway is amine and polyamine biosynthesis; creatine biosynthesis; creatine from L-arginine and glycine: step 1/2. Transamidinase that catalyzes the transfer of the amidino group of L-arginine onto the amino moiety of acceptor metabolites such as glycine, beta-alanine, gamma-aminobutyric acid (GABA) and taurine yielding the corresponding guanidine derivatives. Catalyzes the rate-limiting step of creatine biosynthesis, namely the transfer of the amidino group from L-arginine to glycine to generate guanidinoacetate, which is then methylated by GAMT to form creatine. Provides creatine as a source for ATP generation in tissues with high energy demands, in particular skeletal muscle, heart and brain. In Sus scrofa (Pig), this protein is Glycine amidinotransferase, mitochondrial (GATM).